A 209-amino-acid chain; its full sequence is MSRNGLGPVAGVDEAGRGACCGPISIAACILPDKPIQELAALTDSKKLSASTREKLMPLIKKHALAWSVIVISAQDIDRFGIQHANISGMRRAVAALGTQPGYVLTDAMKVPGFTVPYLPIIGGDASARCIAAASVLAKQTRDDIMTDMANDYPHYGLEIHKGYSTKIHMDAVRHHGASPEHRYSYANVAKAHQEWLHAADNDTTEGGA.

The RNase H type-2 domain occupies G7–H198. Residues D13, E14, and D107 each coordinate a divalent metal cation.

The protein belongs to the RNase HII family. Mn(2+) serves as cofactor. The cofactor is Mg(2+).

Its subcellular location is the cytoplasm. It carries out the reaction Endonucleolytic cleavage to 5'-phosphomonoester.. Its function is as follows. Endonuclease that specifically degrades the RNA of RNA-DNA hybrids. The polypeptide is Ribonuclease HII (Corynebacterium glutamicum (strain ATCC 13032 / DSM 20300 / JCM 1318 / BCRC 11384 / CCUG 27702 / LMG 3730 / NBRC 12168 / NCIMB 10025 / NRRL B-2784 / 534)).